The following is a 167-amino-acid chain: Large ribosomal subunit protein uL5 (167 aa).

Belongs to the universal ribosomal protein uL5 family. Part of the 50S ribosomal subunit; contacts the 5S rRNA and probably tRNA. Forms a bridge to the 30S subunit in the 70S ribosome.

Its function is as follows. This is one of the proteins that bind and probably mediate the attachment of the 5S RNA into the large ribosomal subunit, where it forms part of the central protuberance. In the 70S ribosome it contacts protein S13 of the 30S subunit (bridge B1b), connecting the 2 subunits; this bridge is implicated in subunit movement. May contact the P site tRNA; the 5S rRNA and some of its associated proteins might help stabilize positioning of ribosome-bound tRNAs. This chain is Large ribosomal subunit protein uL5, found in Methanoculleus marisnigri (strain ATCC 35101 / DSM 1498 / JR1).